Here is a 226-residue protein sequence, read N- to C-terminus: MKMETFLVCLFHNAAGLHQQIQEILYLLRMHIYETNLYLKQELSRLIYPNRQLSFVLLMPLSLLRNWDDIEYLTDIVDDKQTLHYAANLLTIYVLHLSMYQKLTKPYFLLAVKRVSEKLNKKQRHSFYEVLVTSETLNNYENLPKNILNTLMFAVRYVFKPTPNYSEIIAELEKKNKIHHIIFNMVITDFQQIREQHMCKHLCETNNELRQECKEIIFDLKVVGNV.

Residues 1–16 form the signal peptide; that stretch reads MKMETFLVCLFHNAAG. An N-linked (GlcNAc...) asparagine; by host glycan is attached at asparagine 164.

Belongs to the asfivirus I226R family.

Functionally, plays a role in the inhibition of host NF-kappa-B and IRF3 signaling pathways. Mechanistically, promotes the degradation of host IKBKG through enhancing its ubiquitination leading to inhibition of both pathways. The chain is Late protein I226R from African swine fever virus (isolate Pig/Kenya/KEN-50/1950) (ASFV).